Consider the following 568-residue polypeptide: Periplasmic trehalase (568 aa).

An N-terminal signal peptide occupies residues 1–39 (MPHVVARSGDVMSSAAPPSCTSLLGLSLSMFVAPCTLTA). Substrate-binding positions include R169, 176-177 (WD), N213, 222-224 (RSQ), 294-296 (RPE), and G327. Catalysis depends on proton donor/acceptor residues D329 and E511. E526 lines the substrate pocket.

It belongs to the glycosyl hydrolase 37 family.

It localises to the periplasm. It carries out the reaction alpha,alpha-trehalose + H2O = alpha-D-glucose + beta-D-glucose. Its function is as follows. Provides the cells with the ability to utilize trehalose at high osmolarity by splitting it into glucose molecules that can subsequently be taken up by the phosphotransferase-mediated uptake system. The protein is Periplasmic trehalase of Xanthomonas oryzae pv. oryzae (strain MAFF 311018).